The chain runs to 416 residues: MEPSATPGAQPGVPTSSGEPFHLPPDYEDEFLRYLWRDYLYPKQYEWVLIAAYVAVFLIALVGNTLVCLAVWRNHHMRTVTNYFIVNLSLADVLVTAICLPASLLVDITESWLFGQALCKVIPYLQAVSVSVAVLTLSFIALDRWYAICHPLLFKSTARRARGSILGIWAVSLAVMVPQAAVMECSSVLPELANRTRLFSVCDEHWADELYPKIYHSCFFIVTYLAPLGLMAMAYFQIFRKLWGRQIPGTTSALVRNWKRPSEQLEAQHQGLCTEPQPRARAFLAEVKQMRARRKTAKMLMVVLLVFALCYLPISVLNVLKRVFGMFRQASDREAVYACFTFSHWLVYANSAANPIIYNFLSGKFREQFKAAFSCCLPGLGPGSSARHKSLSLQSRCSVSKVSEHVVLTTVTTVLS.

The interval 1–22 (MEPSATPGAQPGVPTSSGEPFH) is disordered. Residues 1 to 46 (MEPSATPGAQPGVPTSSGEPFHLPPDYEDEFLRYLWRDYLYPKQYE) lie on the Extracellular side of the membrane. The required for response to orexin-A stretch occupies residues 26-41 (DYEDEFLRYLWRDYLY). The chain crosses the membrane as a helical span at residues 47-67 (WVLIAAYVAVFLIALVGNTLV). Residues 68–82 (CLAVWRNHHMRTVTN) lie on the Cytoplasmic side of the membrane. The helical transmembrane segment at 83–105 (YFIVNLSLADVLVTAICLPASLL) threads the bilayer. Over 106-119 (VDITESWLFGQALC) the chain is Extracellular. C119 and C202 form a disulfide bridge. A helical transmembrane segment spans residues 120–140 (KVIPYLQAVSVSVAVLTLSFI). The Cytoplasmic segment spans residues 141 to 160 (ALDRWYAICHPLLFKSTARR). Residues 161–182 (ARGSILGIWAVSLAVMVPQAAV) form a helical membrane-spanning segment. At 183–213 (MECSSVLPELANRTRLFSVCDEHWADELYPK) the chain is on the extracellular side. Residue N194 is glycosylated (N-linked (GlcNAc...) asparagine). The helical transmembrane segment at 214–235 (IYHSCFFIVTYLAPLGLMAMAY) threads the bilayer. At 236–298 (FQIFRKLWGR…QMRARRKTAK (63 aa)) the chain is on the cytoplasmic side. Residues 299-321 (MLMVVLLVFALCYLPISVLNVLK) traverse the membrane as a helical segment. Over 322–336 (RVFGMFRQASDREAV) the chain is Extracellular. Residues 337–360 (YACFTFSHWLVYANSAANPIIYNF) form a helical membrane-spanning segment. Residues 361–416 (LSGKFREQFKAAFSCCLPGLGPGSSARHKSLSLQSRCSVSKVSEHVVLTTVTTVLS) lie on the Cytoplasmic side of the membrane.

The protein belongs to the G-protein coupled receptor 1 family. Widely expressed.

It localises to the cell membrane. In terms of biological role, moderately selective excitatory receptor for orexin-A and, with a lower affinity, for orexin-B neuropeptide. Triggers an increase in cytoplasmic Ca(2+) levels in response to orexin-A binding. This Mus musculus (Mouse) protein is Orexin/Hypocretin receptor type 1.